The chain runs to 359 residues: Histidinol-phosphate aminotransferase 1 (359 aa).

An N6-(pyridoxal phosphate)lysine modification is found at lysine 216.

This sequence belongs to the class-II pyridoxal-phosphate-dependent aminotransferase family. Histidinol-phosphate aminotransferase subfamily. As to quaternary structure, homodimer. Requires pyridoxal 5'-phosphate as cofactor.

The catalysed reaction is L-histidinol phosphate + 2-oxoglutarate = 3-(imidazol-4-yl)-2-oxopropyl phosphate + L-glutamate. It participates in amino-acid biosynthesis; L-histidine biosynthesis; L-histidine from 5-phospho-alpha-D-ribose 1-diphosphate: step 7/9. The sequence is that of Histidinol-phosphate aminotransferase 1 (hisC1) from Caulobacter vibrioides (strain ATCC 19089 / CIP 103742 / CB 15) (Caulobacter crescentus).